A 52-amino-acid chain; its full sequence is MPQMSPMMWFSLFIMFSMTMMLFNQLNFFSYKPNKIMSSNNKIKKKNINWMW.

The chain crosses the membrane as a helical span at residues 7–23 (MMWFSLFIMFSMTMMLF).

Belongs to the ATPase protein 8 family. As to quaternary structure, F-type ATPases have 2 components, CF(1) - the catalytic core - and CF(0) - the membrane proton channel.

The protein resides in the mitochondrion membrane. In terms of biological role, mitochondrial membrane ATP synthase (F(1)F(0) ATP synthase or Complex V) produces ATP from ADP in the presence of a proton gradient across the membrane which is generated by electron transport complexes of the respiratory chain. F-type ATPases consist of two structural domains, F(1) - containing the extramembraneous catalytic core and F(0) - containing the membrane proton channel, linked together by a central stalk and a peripheral stalk. During catalysis, ATP synthesis in the catalytic domain of F(1) is coupled via a rotary mechanism of the central stalk subunits to proton translocation. Part of the complex F(0) domain. Minor subunit located with subunit a in the membrane. This is ATP synthase protein 8 (MT-ATP8) from Locusta migratoria (Migratory locust).